The primary structure comprises 196 residues: Probable histone chaperone ASF1A (196 aa).

Over residues valine 146 to glutamate 157 the composition is skewed to basic and acidic residues. The tract at residues valine 146–serine 196 is disordered.

It belongs to the ASF1 family. As to quaternary structure, interacts with histone H3 and histone H4. Component of the HIRA complex made of UBN1, UBN2, ASF1A, CABIN1 and HIRA. Interacts with HIRA. Expressed in leaves and flower buds.

Its subcellular location is the nucleus. The protein resides in the nucleolus. Histone chaperone that facilitates histone deposition and histone exchange and removal during nucleosome assembly and disassembly. While encoded by a region of the Arabidopsis thaliana genome that is homologous to the Brassica S-locus for self incompatibility, this protein may not play the same role in Arabidopsis thaliana. The sequence is that of Probable histone chaperone ASF1A (ASF1A) from Arabidopsis thaliana (Mouse-ear cress).